A 499-amino-acid chain; its full sequence is Probable cytosol aminopeptidase (499 aa).

The Mn(2+) site is built by lysine 271 and aspartate 276. Residue lysine 283 is part of the active site. Residues aspartate 294, aspartate 353, and glutamate 355 each contribute to the Mn(2+) site. Residue arginine 357 is part of the active site.

It belongs to the peptidase M17 family. The cofactor is Mn(2+).

The protein resides in the cytoplasm. The catalysed reaction is Release of an N-terminal amino acid, Xaa-|-Yaa-, in which Xaa is preferably Leu, but may be other amino acids including Pro although not Arg or Lys, and Yaa may be Pro. Amino acid amides and methyl esters are also readily hydrolyzed, but rates on arylamides are exceedingly low.. It carries out the reaction Release of an N-terminal amino acid, preferentially leucine, but not glutamic or aspartic acids.. In terms of biological role, presumably involved in the processing and regular turnover of intracellular proteins. Catalyzes the removal of unsubstituted N-terminal amino acids from various peptides. This chain is Probable cytosol aminopeptidase, found in Bordetella parapertussis (strain 12822 / ATCC BAA-587 / NCTC 13253).